We begin with the raw amino-acid sequence, 147 residues long: Nucleoside diphosphate kinase (147 aa).

ATP-binding residues include K9, F57, R85, T91, R102, and N112. Catalysis depends on H115, which acts as the Pros-phosphohistidine intermediate.

This sequence belongs to the NDK family. In terms of assembly, homotetramer. Mg(2+) serves as cofactor.

Its subcellular location is the cytoplasm. It carries out the reaction a 2'-deoxyribonucleoside 5'-diphosphate + ATP = a 2'-deoxyribonucleoside 5'-triphosphate + ADP. The enzyme catalyses a ribonucleoside 5'-diphosphate + ATP = a ribonucleoside 5'-triphosphate + ADP. In terms of biological role, major role in the synthesis of nucleoside triphosphates other than ATP. The ATP gamma phosphate is transferred to the NDP beta phosphate via a ping-pong mechanism, using a phosphorylated active-site intermediate. The sequence is that of Nucleoside diphosphate kinase from Listeria monocytogenes serotype 4a (strain HCC23).